Consider the following 332-residue polypeptide: tRNA(Ile)-lysidine synthase (332 aa).

An ATP-binding site is contributed by Ser-39–Ser-44.

Belongs to the tRNA(Ile)-lysidine synthase family.

Its subcellular location is the cytoplasm. It carries out the reaction cytidine(34) in tRNA(Ile2) + L-lysine + ATP = lysidine(34) in tRNA(Ile2) + AMP + diphosphate + H(+). In terms of biological role, ligates lysine onto the cytidine present at position 34 of the AUA codon-specific tRNA(Ile) that contains the anticodon CAU, in an ATP-dependent manner. Cytidine is converted to lysidine, thus changing the amino acid specificity of the tRNA from methionine to isoleucine. The chain is tRNA(Ile)-lysidine synthase from Leifsonia xyli subsp. xyli (strain CTCB07).